Reading from the N-terminus, the 423-residue chain is 3-phosphoshikimate 1-carboxyvinyltransferase (423 aa).

3-phosphoshikimate-binding residues include Lys21, Ser22, and Arg26. Position 21 (Lys21) interacts with phosphoenolpyruvate. 2 residues coordinate phosphoenolpyruvate: Gly92 and Arg120. 3-phosphoshikimate contacts are provided by Ser164, Gln166, Asp312, and Lys339. Gln166 lines the phosphoenolpyruvate pocket. Asp312 (proton acceptor) is an active-site residue. Arg343 and Arg385 together coordinate phosphoenolpyruvate.

The protein belongs to the EPSP synthase family. In terms of assembly, monomer.

Its subcellular location is the cytoplasm. It catalyses the reaction 3-phosphoshikimate + phosphoenolpyruvate = 5-O-(1-carboxyvinyl)-3-phosphoshikimate + phosphate. It participates in metabolic intermediate biosynthesis; chorismate biosynthesis; chorismate from D-erythrose 4-phosphate and phosphoenolpyruvate: step 6/7. Its function is as follows. Catalyzes the transfer of the enolpyruvyl moiety of phosphoenolpyruvate (PEP) to the 5-hydroxyl of shikimate-3-phosphate (S3P) to produce enolpyruvyl shikimate-3-phosphate and inorganic phosphate. The polypeptide is 3-phosphoshikimate 1-carboxyvinyltransferase (Thermoanaerobacter pseudethanolicus (strain ATCC 33223 / 39E) (Clostridium thermohydrosulfuricum)).